A 283-amino-acid chain; its full sequence is Undecaprenyl-diphosphatase (283 aa).

7 consecutive transmembrane segments (helical) span residues 46–66 (PGVSVTAAIQLGSVAAVIAYF), 95–115 (VAMVIGTLPILVLGLGIKFFW), 127–147 (VPSIAIVSIVMALFLAMAECM), 154–174 (LGGVTGRDGFVVGLAQALAVI), 200–220 (FSFLLGIPAISIAGLVELKSA), 227–247 (AGPLPLLVGIFSAAVVSWLAI), and 259–279 (TWIFVGYRLVFGAGLLVWWAF).

It belongs to the UppP family.

The protein resides in the cell inner membrane. It carries out the reaction di-trans,octa-cis-undecaprenyl diphosphate + H2O = di-trans,octa-cis-undecaprenyl phosphate + phosphate + H(+). Its function is as follows. Catalyzes the dephosphorylation of undecaprenyl diphosphate (UPP). Confers resistance to bacitracin. The chain is Undecaprenyl-diphosphatase from Synechococcus sp. (strain CC9902).